Here is a 486-residue protein sequence, read N- to C-terminus: Protein nucleotidyltransferase YdiU (486 aa).

Gly-90, Gly-92, Arg-93, Lys-113, Asp-125, Gly-126, Arg-176, and Arg-183 together coordinate ATP. Asp-252 acts as the Proton acceptor in catalysis. Mg(2+) is bound by residues Asn-253 and Asp-262. Asp-262 is an ATP binding site.

It belongs to the SELO family. Mg(2+) serves as cofactor. The cofactor is Mn(2+).

The enzyme catalyses L-seryl-[protein] + ATP = 3-O-(5'-adenylyl)-L-seryl-[protein] + diphosphate. The catalysed reaction is L-threonyl-[protein] + ATP = 3-O-(5'-adenylyl)-L-threonyl-[protein] + diphosphate. It catalyses the reaction L-tyrosyl-[protein] + ATP = O-(5'-adenylyl)-L-tyrosyl-[protein] + diphosphate. It carries out the reaction L-histidyl-[protein] + UTP = N(tele)-(5'-uridylyl)-L-histidyl-[protein] + diphosphate. The enzyme catalyses L-seryl-[protein] + UTP = O-(5'-uridylyl)-L-seryl-[protein] + diphosphate. The catalysed reaction is L-tyrosyl-[protein] + UTP = O-(5'-uridylyl)-L-tyrosyl-[protein] + diphosphate. Functionally, nucleotidyltransferase involved in the post-translational modification of proteins. It can catalyze the addition of adenosine monophosphate (AMP) or uridine monophosphate (UMP) to a protein, resulting in modifications known as AMPylation and UMPylation. The chain is Protein nucleotidyltransferase YdiU from Pseudomonas putida (strain W619).